Here is a 526-residue protein sequence, read N- to C-terminus: Phosphoenolpyruvate carboxylase (526 aa).

Belongs to the PEPCase type 2 family. As to quaternary structure, homotetramer. It depends on Mg(2+) as a cofactor.

It catalyses the reaction oxaloacetate + phosphate = phosphoenolpyruvate + hydrogencarbonate. In terms of biological role, catalyzes the irreversible beta-carboxylation of phosphoenolpyruvate (PEP) to form oxaloacetate (OAA), a four-carbon dicarboxylic acid source for the tricarboxylic acid cycle. The chain is Phosphoenolpyruvate carboxylase from Methanosarcina mazei (strain ATCC BAA-159 / DSM 3647 / Goe1 / Go1 / JCM 11833 / OCM 88) (Methanosarcina frisia).